The primary structure comprises 234 residues: MGLMNRSKNDEYVKLLGAWPSPFVLRTRIALNLKNVAYEYLEEEDTLSSESVLNYNPVHKQIPILIHGNKPIRESLNIVMYVDETWLSGPPILPSDPFDRAVARFWDVYIDEHCFTSINGVAVAKGEENINAAIAKLEQCMALLEETFQECSKGRGFFGGENIGFIDIGFGSMLGPLTVLEKFTGVKFIHPENTPGLFHWADRFYAHEAVKPVMPDIEKLVQFARLKFNTSIFK.

Residues 11–90 (EYVKLLGAWP…YVDETWLSGP (80 aa)) form the GST N-terminal domain. Residues 21-22 (SP), 47-48 (LS), 61-62 (QI), and 74-75 (ES) contribute to the glutathione site. One can recognise a GST C-terminal domain in the interval 96-228 (DPFDRAVARF…KLVQFARLKF (133 aa)).

Belongs to the GST superfamily. Tau family.

The protein resides in the cytoplasm. It is found in the cytosol. It carries out the reaction RX + glutathione = an S-substituted glutathione + a halide anion + H(+). In terms of biological role, may be involved in the conjugation of reduced glutathione to a wide number of exogenous and endogenous hydrophobic electrophiles and have a detoxification role against certain herbicides. In Arabidopsis thaliana (Mouse-ear cress), this protein is Glutathione S-transferase U11 (GSTU11).